A 914-amino-acid polypeptide reads, in one-letter code: TRPM8 channel-associated factor 3 (914 aa).

A Peptidase M60 domain is found at 533–832; that stretch reads NSWVSTGLYL…TYLQLQEGFG (300 aa).

It belongs to the TCAF family.

Its function is as follows. May play a role in the regulation of the cation channel TRPM8 activity. This Rattus norvegicus (Rat) protein is TRPM8 channel-associated factor 3.